A 911-amino-acid polypeptide reads, in one-letter code: Chitin synthase G (911 aa).

Disordered stretches follow at residues 1 to 66 (MAYQ…VSGY) and 107 to 138 (GRVASPYARSDTSSTEAWRQRQAPGGGPGGLR). Residues 12–34 (PHYDDNGHRLQDLPHGSYEEEAS) show a composition bias toward basic and acidic residues. Residues 54–66 (QHGSSTTRPVSGY) show a composition bias toward polar residues. Transmembrane regions (helical) follow at residues 579-599 (IFSTVLTWFSLASYWLTTTVI), 624-644 (IINTIVKYVYLGFLLLQFILA), 659-679 (SFVVFGIIQVYVVIDALYLVV), 711-731 (IIIIALAATFGLYFVASFMYL), 840-860 (LVTFWIFSNAFLAVCITSDGV), and 879-899 (ALLWSNAVVALFRFIGACWFL).

The protein belongs to the chitin synthase family. Class III subfamily.

It is found in the cell membrane. The enzyme catalyses [(1-&gt;4)-N-acetyl-beta-D-glucosaminyl](n) + UDP-N-acetyl-alpha-D-glucosamine = [(1-&gt;4)-N-acetyl-beta-D-glucosaminyl](n+1) + UDP + H(+). Functionally, polymerizes chitin, a structural polymer of the cell wall and septum, by transferring the sugar moiety of UDP-GlcNAc to the non-reducing end of the growing chitin polymer. This Aspergillus fumigatus (strain ATCC MYA-4609 / CBS 101355 / FGSC A1100 / Af293) (Neosartorya fumigata) protein is Chitin synthase G (chsG).